Consider the following 299-residue polypeptide: Nucleotide-binding protein SCO1952 (299 aa).

23–30 (GMSGAGRS) is a binding site for ATP. 74 to 77 (DVRG) serves as a coordination point for GTP.

Belongs to the RapZ-like family.

Functionally, displays ATPase and GTPase activities. The sequence is that of Nucleotide-binding protein SCO1952 from Streptomyces coelicolor (strain ATCC BAA-471 / A3(2) / M145).